The primary structure comprises 365 residues: WAT1-related protein At4g01440 (365 aa).

Transmembrane regions (helical) follow at residues 8 to 28, 40 to 60, 72 to 92, 101 to 121, 132 to 152, 181 to 201, 213 to 233, 249 to 269, 277 to 297, and 302 to 322; these read WTPV…NALV, VIAT…AFFW, ILVQ…YFFL, TLAC…ALIF, AGMG…LLTM, WIIG…WMLI, YSST…LSLI, IVTI…GTSW, IFTS…DFLI, and IFLG…IFLL. EamA domains follow at residues 25 to 144 and 196 to 321; these read NALV…LICI and GSWM…YIFL.

The protein belongs to the drug/metabolite transporter (DMT) superfamily. Plant drug/metabolite exporter (P-DME) (TC 2.A.7.4) family.

The protein resides in the membrane. This Arabidopsis thaliana (Mouse-ear cress) protein is WAT1-related protein At4g01440.